The chain runs to 149 residues: Large ribosomal subunit protein bL20m (149 aa).

The transit peptide at M1–W9 directs the protein to the mitochondrion.

The protein belongs to the bacterial ribosomal protein bL20 family. As to quaternary structure, component of the mitochondrial ribosome large subunit (39S) which comprises a 16S rRNA and about 50 distinct proteins. Interacts with OXA1L.

Its subcellular location is the mitochondrion. This is Large ribosomal subunit protein bL20m (MRPL20) from Bos taurus (Bovine).